The following is a 111-amino-acid chain: Cytochrome c oxidase subunit 6A1, mitochondrial (111 aa).

Residues 1–26 constitute a mitochondrion transit peptide; it reads MASAVLSASRVSGLLGRALPRVGRPM. Residues 27–36 lie on the Mitochondrial matrix side of the membrane; sequence SSGAHGEEGS. Residues 37–61 traverse the membrane as a helical segment; sequence ARIWKALTYFVALPGVGVSMLNVFL. The Mitochondrial intermembrane segment spans residues 62 to 111; sequence KSRHEEHERPEFVAYPHLRIRTKPFPWGDGNHTLFHNPHMNPLPTGYEDE.

This sequence belongs to the cytochrome c oxidase subunit 6A family. As to quaternary structure, component of the cytochrome c oxidase (complex IV, CIV), a multisubunit enzyme composed of 14 subunits. The complex is composed of a catalytic core of 3 subunits MT-CO1, MT-CO2 and MT-CO3, encoded in the mitochondrial DNA, and 11 supernumerary subunits COX4I, COX5A, COX5B, COX6A, COX6B, COX6C, COX7A, COX7B, COX7C, COX8 and NDUFA4, which are encoded in the nuclear genome. The complex exists as a monomer or a dimer and forms supercomplexes (SCs) in the inner mitochondrial membrane with NADH-ubiquinone oxidoreductase (complex I, CI) and ubiquinol-cytochrome c oxidoreductase (cytochrome b-c1 complex, complex III, CIII), resulting in different assemblies (supercomplex SCI(1)III(2)IV(1) and megacomplex MCI(2)III(2)IV(2)).

It localises to the mitochondrion inner membrane. It functions in the pathway energy metabolism; oxidative phosphorylation. In terms of biological role, component of the cytochrome c oxidase, the last enzyme in the mitochondrial electron transport chain which drives oxidative phosphorylation. The respiratory chain contains 3 multisubunit complexes succinate dehydrogenase (complex II, CII), ubiquinol-cytochrome c oxidoreductase (cytochrome b-c1 complex, complex III, CIII) and cytochrome c oxidase (complex IV, CIV), that cooperate to transfer electrons derived from NADH and succinate to molecular oxygen, creating an electrochemical gradient over the inner membrane that drives transmembrane transport and the ATP synthase. Cytochrome c oxidase is the component of the respiratory chain that catalyzes the reduction of oxygen to water. Electrons originating from reduced cytochrome c in the intermembrane space (IMS) are transferred via the dinuclear copper A center (CU(A)) of subunit 2 and heme A of subunit 1 to the active site in subunit 1, a binuclear center (BNC) formed by heme A3 and copper B (CU(B)). The BNC reduces molecular oxygen to 2 water molecules unsing 4 electrons from cytochrome c in the IMS and 4 protons from the mitochondrial matrix. The chain is Cytochrome c oxidase subunit 6A1, mitochondrial (Cox6a1) from Rattus norvegicus (Rat).